The chain runs to 873 residues: uncharacterized protein (873 aa).

Disordered stretches follow at residues 1–24, 175–251, 375–423, 506–540, 568–592, 662–773, and 822–855; these read MSNK…SMSK, SSAV…TSIS, PSRH…AKKP, DSES…ATRS, DQSS…APEY, ANDS…TSQI, and ANPY…EEPI. Residues 211 to 225 show a composition bias toward basic and acidic residues; that stretch reads KDSDRSQTKNTHEET. The span at 376-385 shows a compositional bias: basic residues; that stretch reads SRHHSHRKKE. The segment covering 574–586 has biased composition (basic residues); sequence PGRHFGKTGRSHF. Residues 665-686 are compositionally biased toward low complexity; the sequence is SPNSSESLESLNNQSYSSSPYS. Positions 698–740 are enriched in polar residues; the sequence is QSLNDSPQTSDFKASNLNDSSSNVHSIFQTRETTSPSVQNKTP. A compositionally biased stretch (basic and acidic residues) spans 743-755; that stretch reads YHRELKSSKDGHE. Over residues 758-773 the composition is skewed to low complexity; the sequence is SPLVSSSPSGSFTSQI. Residues 823-855 show a composition bias toward polar residues; that stretch reads NPYSTNNDGNPSNNTSDVEVNETSMNDNSEEPI.

It localises to the cytoplasm. It is found in the vacuole membrane. This is an uncharacterized protein from Schizosaccharomyces pombe (strain 972 / ATCC 24843) (Fission yeast).